Here is a 193-residue protein sequence, read N- to C-terminus: MRLCDRDIEAWLDEGRLSINPRPPVERINGATVDVRLGNKFRTFRGHTAAFIDLSGPKDEVSAALDRVMSDEIVLDESEAFYLHPGELALAVTLESVTLPADLVGWLDGRSSLARLGLMVHVTAHRIDPGWSGCIVLEFYNSGKLPLALRPGMLIGALSFEPLSGPAARPYNRREDAKYRNQQGAVASRIDKD.

Residues 110 to 115 (RSSLAR), Asp-128, 136 to 138 (VLE), Tyr-171, Lys-178, and Gln-182 each bind dCTP. Catalysis depends on Glu-138, which acts as the Proton donor/acceptor. The interval 169 to 193 (RPYNRREDAKYRNQQGAVASRIDKD) is disordered.

It belongs to the dCTP deaminase family. In terms of assembly, homotrimer.

It carries out the reaction dCTP + H2O + H(+) = dUTP + NH4(+). The protein operates within pyrimidine metabolism; dUMP biosynthesis; dUMP from dCTP (dUTP route): step 1/2. Its function is as follows. Catalyzes the deamination of dCTP to dUTP. This is dCTP deaminase from Escherichia coli O1:K1 / APEC.